A 334-amino-acid polypeptide reads, in one-letter code: HTH-type transcriptional repressor PurR (334 aa).

The HTH lacI-type domain maps to 2 to 56 (ATIKDVAKMAGVSTTTVSHVINKTRHVADETKQTVLDAIKALNYSPSAVARSLKV). Residues 4-23 (IKDVAKMAGVSTTTVSHVIN) constitute a DNA-binding region (H-T-H motif). A DNA-binding region spans residues 48 to 56 (SAVARSLKV). Hypoxanthine is bound by residues tyrosine 73, lysine 189, threonine 191, phenylalanine 220, and aspartate 274.

Homodimer.

It functions in the pathway purine metabolism; purine nucleotide biosynthesis [regulation]. Its function is as follows. Is the main repressor of the genes involved in the de novo synthesis of purine nucleotides, regulating purB, purC, purEK, purF, purHD, purL, purMN and guaBA expression. PurR is allosterically activated to bind its cognate DNA by binding the purine corepressors, hypoxanthine or guanine, thereby effecting transcription repression. The chain is HTH-type transcriptional repressor PurR from Mannheimia succiniciproducens (strain KCTC 0769BP / MBEL55E).